The sequence spans 341 residues: Protein BEARSKIN2 (341 aa).

In terms of domain architecture, NAC spans 9–160 (VPPGFRFHPT…GWVVCRVFMK (152 aa)). Residues 109-166 (IGMRKTLVFYKGRAPHGQKTDWIMHEYRLEDADDPQANPSEDGWVVCRVFMKKNLFKV) mediate DNA binding.

Expressed throughout the root cap, in both columella (COL) and lateral root cap (LRC) cells, with higher levels in the COL-adjoining LRC than the upper LRC. Also present at low levels expression in the tips of cotyledons and the cotyledon vasculature, as weel as in vasculature of the first pair of true leaves and at the hydathodes.

The protein localises to the nucleus. Its function is as follows. Transcription activator. Together with BRN1 and SMB, regulates cellular maturation of root cap. Promotes the expression of genes involved in secondary cell walls (SCW) biosynthesis. The chain is Protein BEARSKIN2 (BRN2) from Arabidopsis thaliana (Mouse-ear cress).